A 321-amino-acid chain; its full sequence is Probable pectate lyase A (321 aa).

The first 20 residues, 1-20 (MANFKLFLALAACLSGQALA), serve as a signal peptide directing secretion. N93 carries an N-linked (GlcNAc...) asparagine glycan. Residues D134, D163, and D167 each coordinate Ca(2+). R220 is an active-site residue.

The protein belongs to the polysaccharide lyase 1 family. Requires Ca(2+) as cofactor.

It is found in the secreted. It catalyses the reaction Eliminative cleavage of (1-&gt;4)-alpha-D-galacturonan to give oligosaccharides with 4-deoxy-alpha-D-galact-4-enuronosyl groups at their non-reducing ends.. Functionally, pectinolytic enzyme consist of four classes of enzymes: pectin lyase, polygalacturonase, pectin methylesterase and rhamnogalacturonase. Among pectinolytic enzymes, pectin lyase is the most important in depolymerization of pectin, since it cleaves internal glycosidic bonds of highly methylated pectins. Favors pectate, the anion, over pectin, the methyl ester. This Aspergillus flavus (strain ATCC 200026 / FGSC A1120 / IAM 13836 / NRRL 3357 / JCM 12722 / SRRC 167) protein is Probable pectate lyase A (plyA).